We begin with the raw amino-acid sequence, 175 residues long: MTSLQYPIGLYGPVENKTKEQLEAWIDQLAEIPQQYEAVTNQLTDAQLDTPYRTGGWTVRQLIHHVADSHLNAYLRFKLALTEETPHIRPYDQAGFAELPDSKAPISLSLPFISSLHRRWVTLLRGMTAEDFTASYYHPADQQTVSLYDATGMYVWHSTHHLAHITELIKRNQWN.

Positions 65, 157, and 161 each coordinate Zn(2+).

It belongs to the metal hydrolase YfiT family. As to quaternary structure, homodimer. Zn(2+) serves as cofactor.

Its subcellular location is the cytoplasm. Possible metal-dependent hydrolase. This Bacillus pumilus (strain SAFR-032) protein is Putative metal-dependent hydrolase BPUM_0784.